A 146-amino-acid polypeptide reads, in one-letter code: Hemoglobin subunit beta (146 aa).

N-acetylvaline is present on Val1. In terms of domain architecture, Globin spans 2–146; it reads HLTPEEKTAV…VANALAHKYH (145 aa). A Phosphothreonine modification is found at Thr12. At Ser44 the chain carries Phosphoserine. At Lys59 the chain carries N6-acetyllysine. His63 is a heme b binding site. Position 82 is an N6-acetyllysine (Lys82). His92 is a heme b binding site. The residue at position 93 (Cys93) is an S-nitrosocysteine. Lys144 is modified (N6-acetyllysine).

The protein belongs to the globin family. In terms of assembly, heterotetramer of two alpha chains and two beta chains. In terms of tissue distribution, red blood cells.

Its function is as follows. Involved in oxygen transport from the lung to the various peripheral tissues. This chain is Hemoglobin subunit beta (HBB), found in Chlorocebus aethiops (Green monkey).